Consider the following 162-residue polypeptide: UPF0763 protein Sdel_0383 (162 aa).

It belongs to the UPF0763 family.

This is UPF0763 protein Sdel_0383 from Sulfurospirillum deleyianum (strain ATCC 51133 / DSM 6946 / 5175).